We begin with the raw amino-acid sequence, 407 residues long: MSESAFSNRIVQSLLDTDFYKLTMMQAVLHNYPNVDVEWEFRCRNGEDLRPYLGEIQHQIELLCELSLSPEHLVFLERITFMKPDFLRFLGLFRFNTRYVKTSIENDELCIRLHGPWLHVILFEVPLLAIVSEVRNRHRYPDTLLSQARDRLYDKFEWLTVNATPDELAELKVADFGTRRRFSYRVQEEVLNVLKLDFPGQLVGTSNVHLARQLDLKPLGTMAHEWIMAHQQLGPRLIDSQIAALDCWVREYRGLLGIALTDCITTDAFLNDFDLYFAKLFDGLRHDSGDPVKWAEKCISHYQKLGIDPMSKTLVFSDGLNLPKALDIFRALRGRINVSFGIGTNLTADIPGIAPMNMVLKMTACAGQAVAKISDESGKTQCKDPNFVAYLRHVFKVPDLPSPAKPA.

His-224 bears the Phosphohistidine; by autocatalysis mark.

The protein belongs to the NAPRTase family. Post-translationally, transiently phosphorylated on a His residue during the reaction cycle. Phosphorylation strongly increases the affinity for substrates and increases the rate of nicotinate D-ribonucleotide production. Dephosphorylation regenerates the low-affinity form of the enzyme, leading to product release.

The catalysed reaction is nicotinate + 5-phospho-alpha-D-ribose 1-diphosphate + ATP + H2O = nicotinate beta-D-ribonucleotide + ADP + phosphate + diphosphate. It participates in cofactor biosynthesis; NAD(+) biosynthesis; nicotinate D-ribonucleotide from nicotinate: step 1/1. Catalyzes the synthesis of beta-nicotinate D-ribonucleotide from nicotinate and 5-phospho-D-ribose 1-phosphate at the expense of ATP. This chain is Nicotinate phosphoribosyltransferase, found in Pseudomonas syringae pv. tomato (strain ATCC BAA-871 / DC3000).